The sequence spans 1375 residues: Patatin-like phospholipase domain-containing protein 6 (1375 aa).

Positions M1 to N20 are disordered. Over M1–L59 the chain is Lumenal. Polar residues predominate over residues M9–N20. N-linked (GlcNAc...) asparagine glycosylation is present at N20. Residues G60–V80 traverse the membrane as a helical segment. Residues R81–A1375 lie on the Cytoplasmic side of the membrane. Residue V195–R322 coordinates a nucleoside 3',5'-cyclic phosphate. 2 disordered regions span residues F352–F436 and L449–Q472. S354 is modified (phosphoserine). The span at T359–T376 shows a compositional bias: polar residues. T361 carries the post-translational modification Phosphothreonine. 2 positions are modified to phosphoserine: S362 and S372. Residues G384–T398 show a composition bias toward pro residues. A Phosphoserine modification is found at S420. A Phosphothreonine modification is found at T464. Residues E511–R633 and T629–K749 contribute to the a nucleoside 3',5'-cyclic phosphate site. One can recognise a PNPLA domain in the interval L981–R1147. The GXGXXG signature appears at G985–G990. The GXSXG signature appears at G1012–G1016. S1014 serves as the catalytic Nucleophile. Residue D1134 is the Proton acceptor of the active site. Residues D1134–G1136 carry the DGA/G motif. The segment at S1306–A1375 is disordered. Residues A1313–G1329 show a composition bias toward acidic residues.

The protein belongs to the NTE family. Post-translationally, glycosylated. In terms of tissue distribution, expressed in brain, placenta, kidney, neuron and skeletal muscle. Expressed in the developing eye, pituitary and brain.

It is found in the endoplasmic reticulum membrane. It carries out the reaction a 1-acyl-sn-glycero-3-phosphocholine + H2O = sn-glycerol 3-phosphocholine + a fatty acid + H(+). It catalyses the reaction 1-(9Z-octadecenoyl)-sn-glycero-3-phosphocholine + H2O = sn-glycerol 3-phosphocholine + (9Z)-octadecenoate + H(+). The catalysed reaction is 1-hexadecanoylglycerol + H2O = glycerol + hexadecanoate + H(+). The enzyme catalyses 2-hexadecanoylglycerol + H2O = glycerol + hexadecanoate + H(+). It carries out the reaction 1-(9Z-octadecenoyl)-glycerol + H2O = glycerol + (9Z)-octadecenoate + H(+). It catalyses the reaction 2-(9Z-octadecenoyl)-glycerol + H2O = glycerol + (9Z)-octadecenoate + H(+). The catalysed reaction is 2-(5Z,8Z,11Z,14Z-eicosatetraenoyl)-glycerol + H2O = glycerol + (5Z,8Z,11Z,14Z)-eicosatetraenoate + H(+). The enzyme catalyses 1-hexadecanoyl-sn-glycero-3-phosphate + H2O = sn-glycerol 3-phosphate + hexadecanoate + H(+). It carries out the reaction 1-hexadecanoyl-sn-glycero-3-phosphocholine + H2O = sn-glycerol 3-phosphocholine + hexadecanoate + H(+). Its activity is regulated as follows. Inhibited by a series a OPs such as mipafox (MPX), phenyl saligenin phosphate (PSP), phenyl dipentyl phosphinate (PDPP), diisopropyl fluorophosphate and paraoxon. Phospholipase B that deacylates intracellular phosphatidylcholine (PtdCho), generating glycerophosphocholine (GroPtdCho). This deacylation occurs at both sn-2 and sn-1 positions of PtdCho. Catalyzes the hydrolysis of several naturally occurring membrane-associated lipids. Hydrolyzes lysophospholipids and monoacylglycerols, preferring the 1-acyl to the 2-acyl isomer. Does not catalyze hydrolysis of di- or triacylglycerols or fatty acid amides. This Homo sapiens (Human) protein is Patatin-like phospholipase domain-containing protein 6.